Reading from the N-terminus, the 182-residue chain is Small ribosomal subunit protein uS4c (182 aa).

Residues 13–32 (GLTSKRPRSGSDLKNPLRSG) form a disordered region. In terms of domain architecture, S4 RNA-binding spans 82-143 (MRLDNILFRL…KQRSKALIQN (62 aa)).

Belongs to the universal ribosomal protein uS4 family. Part of the 30S ribosomal subunit. Contacts protein S5. The interaction surface between S4 and S5 is involved in control of translational fidelity.

It localises to the plastid. Its subcellular location is the chloroplast. One of the primary rRNA binding proteins, it binds directly to 16S rRNA where it nucleates assembly of the body of the 30S subunit. In terms of biological role, with S5 and S12 plays an important role in translational accuracy. This chain is Small ribosomal subunit protein uS4c (rps4), found in Scadoxus puniceus (Paintbrush lily).